The primary structure comprises 505 residues: AMP phosphorylase 2 (505 aa).

Residues Gly-169, 195 to 200 (SRAITT), Thr-204, Ser-265, and Lys-289 each bind AMP.

It belongs to the thymidine/pyrimidine-nucleoside phosphorylase family. Type 2 subfamily.

The enzyme catalyses AMP + phosphate = alpha-D-ribose 1,5-bisphosphate + adenine. It catalyses the reaction CMP + phosphate = cytosine + alpha-D-ribose 1,5-bisphosphate. It carries out the reaction UMP + phosphate = alpha-D-ribose 1,5-bisphosphate + uracil. In terms of biological role, catalyzes the conversion of AMP and phosphate to adenine and ribose 1,5-bisphosphate (R15P). Exhibits phosphorylase activity toward CMP and UMP in addition to AMP. Functions in an archaeal AMP degradation pathway, together with R15P isomerase and RubisCO. The sequence is that of AMP phosphorylase 2 from Archaeoglobus fulgidus (strain ATCC 49558 / DSM 4304 / JCM 9628 / NBRC 100126 / VC-16).